A 395-amino-acid chain; its full sequence is GTPase Obg (395 aa).

In terms of domain architecture, Obg spans methionine 1–methionine 159. Residues isoleucine 128–glycine 147 form a disordered region. The OBG-type G domain occupies alanine 160 to threonine 333. GTP is bound by residues glycine 166–serine 173, phenylalanine 191–valine 195, aspartate 213–glycine 216, asparagine 283–aspartate 286, and serine 314–isoleucine 316. Residues serine 173 and threonine 193 each contribute to the Mg(2+) site. Residues alanine 340–methionine 368 show a composition bias toward basic and acidic residues. Residues alanine 340–proline 395 form a disordered region. A compositionally biased stretch (acidic residues) spans glutamate 376–proline 395.

It belongs to the TRAFAC class OBG-HflX-like GTPase superfamily. OBG GTPase family. Monomer. The cofactor is Mg(2+).

It localises to the cytoplasm. In terms of biological role, an essential GTPase which binds GTP, GDP and possibly (p)ppGpp with moderate affinity, with high nucleotide exchange rates and a fairly low GTP hydrolysis rate. Plays a role in control of the cell cycle, stress response, ribosome biogenesis and in those bacteria that undergo differentiation, in morphogenesis control. This is GTPase Obg from Chromohalobacter salexigens (strain ATCC BAA-138 / DSM 3043 / CIP 106854 / NCIMB 13768 / 1H11).